A 428-amino-acid polypeptide reads, in one-letter code: MTAIQKPVVAKREAPKAEVNPTVSRSTQTETIKPTKERTVSVFSPPVFNFAANSFAQSVSNEYKHASPKRIKLDNSRVQVPSIVKPKQDKPRPPAIVTKPRVINIEFPNKQKSGFKLLIRPKHEPSIKKQKQGIEVLSTSNTKRITKSISVDDVEYVEKVKHAIKQVLPKPDYDDGSLGPVILRLAWHCCATYNKFTGNGGSNGSTMRFVPEITDDGNSGLDIARSALEPIKQKFPDITYSDLWTLAGKISIQEMGGPKIPWRCGRVDCIDDRYVPPNGRLPFAYKNANHIRETFGRMGFNDRETVSLLGAHGLGRCHKRFSGWEGKWTENPTSFSNDFYKVLLDEEWSLGTVPETGKEQYYNKDKSLIMLNTDIELIRDPHFLHFVKLYSQHQATFFQDFANAFGKLLELGIERDSNGNVLPKNEFY.

Residues 1–33 form a disordered region; that stretch reads MTAIQKPVVAKREAPKAEVNPTVSRSTQTETIK. Polar residues predominate over residues 21–32; the sequence is PTVSRSTQTETI. H188 functions as the Proton acceptor in the catalytic mechanism. H312 contributes to the heme b binding site. The active-site Tryptophan radical intermediate is the W328.

It belongs to the peroxidase family. Cytochrome c peroxidase subfamily. The cofactor is heme b.

Functionally, destroys radicals which are normally produced within the cells and which are toxic to biological systems. This Debaryomyces hansenii (strain ATCC 36239 / CBS 767 / BCRC 21394 / JCM 1990 / NBRC 0083 / IGC 2968) (Yeast) protein is Putative heme-binding peroxidase.